We begin with the raw amino-acid sequence, 288 residues long: Intermediate transcription factor 3 small subunit (288 aa).

Belongs to the orthopoxvirus OPG134 family. As to quaternary structure, heterodimer of a 45 kDa (A23R) and a 32 kDa (A8R) subunit to form the virus intermediate transcription factor (VITF)-3.

In terms of biological role, acts with RNA polymerase to initiate transcription from intermediate gene promoters. The chain is Intermediate transcription factor 3 small subunit (OPG134) from Homo sapiens (Human).